Reading from the N-terminus, the 500-residue chain is Glucokinase-1 (500 aa).

Ser-2 carries the post-translational modification N-acetylserine. Ser-2 carries the phosphoserine modification. The region spanning 12–498 is the Hexokinase domain; that stretch reads RAVIQAVDQI…SGVGAALCAL (487 aa). Residues 74-216 form a hexokinase small subdomain region; it reads NGTERGVLLA…MPMIKVVALT (143 aa). Position 110 (Lys-110) interacts with ATP. Residues 158-184 form a glucose-binding region; that stretch reads KLGFTFSYPVDQTSLNSGTLIRWTKGF. Residues 217–487 are hexokinase large subdomain; sequence NDTVGTYLSH…RKVHLKIAKD (271 aa). The residue at position 470 (Ser-470) is a Phosphoserine. 487-492 lines the ATP pocket; sequence DGSGVG.

It belongs to the hexokinase family. In terms of assembly, monomer.

The catalysed reaction is D-glucose + ATP = D-glucose 6-phosphate + ADP + H(+). Its pathway is carbohydrate metabolism; hexose metabolism. It functions in the pathway carbohydrate degradation; glycolysis; D-glyceraldehyde 3-phosphate and glycerone phosphate from D-glucose: step 1/4. In terms of biological role, two isoenzymes, hexokinase-1 and hexokinase-2, can phosphorylate keto- and aldohexoses in yeast, whereas a third isoenzyme, GLK, is specific for aldohexoses. All glucose phosphorylating enzymes are involved in glucose uptake. The polypeptide is Glucokinase-1 (GLK1) (Saccharomyces cerevisiae (strain ATCC 204508 / S288c) (Baker's yeast)).